A 580-amino-acid polypeptide reads, in one-letter code: Purine permease (580 aa).

Helical transmembrane passes span 68–88 (PLVL…AGVI), 107–127 (SQYL…VQMF), 136–156 (YYVG…ITVA), 184–204 (YGAL…LSFM), 211–231 (ALFP…SLIG), 263–283 (LPWG…TIIL), 294–314 (SCAV…CGYF), 385–405 (LGNG…MSVF), 426–446 (CCFF…LVAI), 447–467 (PSSV…ISGV), 481–501 (FILT…DWFS), and 522–542 (LVMA…NLIL).

It belongs to the nucleobase:cation symporter-2 (NCS2) (TC 2.A.40) family.

Its subcellular location is the membrane. Its function is as follows. Able to transport with low efficiency all natural purines as well as purine analogs. In Emericella nidulans (strain FGSC A4 / ATCC 38163 / CBS 112.46 / NRRL 194 / M139) (Aspergillus nidulans), this protein is Purine permease (uapC).